Consider the following 656-residue polypeptide: Sulfate transporter 1.3 (656 aa).

The segment at 1 to 30 (MSARAHPVDDDGEISPVERSSPRQANTPYV) is disordered. The Cytoplasmic portion of the chain corresponds to 1 to 94 (MSARAHPVDD…GRKYNLKLFR (94 aa)). Residues 95-115 (GDLIAGLTIASLCIPQDIGYA) traverse the membrane as a helical segment. Residues 116 to 119 (KLAS) are Extracellular-facing. Residues 120–140 (LDPKYGLYSSFVPPLVYACMG) form a helical membrane-spanning segment. Topologically, residues 141-144 (SSKD) are cytoplasmic. The chain crosses the membrane as a helical span at residues 145–165 (IAIGPVAVVSLLLGTLLRAEI). Residues 166-176 (DPNTNPNEYLR) lie on the Extracellular side of the membrane. Transmembrane regions (helical) follow at residues 177-197 (LAFT…FFRL) and 198-218 (GFLI…GAAI). Residues 219–256 (TIALQQLKGFLGINKFTKKTDIIAVLSSVISSAHHGWN) lie on the Extracellular side of the membrane. The helical transmembrane segment at 257 to 277 (WQTILISASFLIFLLISKFIG) threads the bilayer. Topologically, residues 278–283 (KRNKKL) are cytoplasmic. Residues 284 to 304 (FWIPAIAPLVSVIISTFFVYI) traverse the membrane as a helical segment. Residues 305 to 342 (TRADKKGVQIVKHLDKGLNPSSLRLIYFSGDYLLKGFR) lie on the Extracellular side of the membrane. Residues 343–363 (IGVVSGMVALTEAVAIGRTFA) form a helical membrane-spanning segment. Over 364–375 (AMKDYQIDGNKE) the chain is Cytoplasmic. The chain crosses the membrane as a helical span at residues 376 to 396 (MVALGAMNVIGSMTSCYVSTG). Residues 397 to 412 (SFSRSAVNFMAGCQTA) are Extracellular-facing. A helical membrane pass occupies residues 413-433 (VSNIIMSIVVLLTLLFLTPLF). Residues 434 to 441 (KYTPNAIL) are Cytoplasmic-facing. Residues 442 to 462 (AAIIINAVIPLVDVNATILIF) form a helical membrane-spanning segment. The Extracellular portion of the chain corresponds to 463-473 (KIDKLDFVACM). A helical transmembrane segment spans residues 474–494 (GAFFGVIFVSVEIGLLIAVGI). Topologically, residues 495-656 (SFAKILLQVT…SCSPKLSDEV (162 aa)) are cytoplasmic. The 124-residue stretch at 525–648 (QYPEATRIPG…LTVAEAVDSC (124 aa)) folds into the STAS domain.

This sequence belongs to the SLC26A/SulP transporter (TC 2.A.53) family. As to expression, expressed in the phloem of cotyledons, hypocotyls and roots.

Its subcellular location is the membrane. Functionally, high-affinity H(+)/sulfate cotransporter that mediates the loading of sulfate into the sieve tube. Plays a central role in the regulation of sulfate assimilation. This Arabidopsis thaliana (Mouse-ear cress) protein is Sulfate transporter 1.3 (SULTR1;3).